The chain runs to 114 residues: UPF0102 protein HPSH_02690 (114 aa).

It belongs to the UPF0102 family.

This is UPF0102 protein HPSH_02690 from Helicobacter pylori (strain Shi470).